Here is a 548-residue protein sequence, read N- to C-terminus: Chaperonin GroEL (548 aa).

ATP-binding positions include 30–33 (TLGP), Lys51, 87–91 (DGTTT), Gly415, 479–481 (NAA), and Asp495. Residues 524-548 (LPKEDKSSDSNSSPAGGMGGMGGMM) are disordered. Residues 539–548 (GGMGGMGGMM) show a composition bias toward gly residues.

The protein belongs to the chaperonin (HSP60) family. Forms a cylinder of 14 subunits composed of two heptameric rings stacked back-to-back. Interacts with the co-chaperonin GroES.

Its subcellular location is the cytoplasm. The enzyme catalyses ATP + H2O + a folded polypeptide = ADP + phosphate + an unfolded polypeptide.. In terms of biological role, together with its co-chaperonin GroES, plays an essential role in assisting protein folding. The GroEL-GroES system forms a nano-cage that allows encapsulation of the non-native substrate proteins and provides a physical environment optimized to promote and accelerate protein folding. In Buchnera aphidicola subsp. Myzus persicae (Myzus persicae primary endosymbiont), this protein is Chaperonin GroEL.